The sequence spans 650 residues: MEDNNKTQAYDSSSIKILEGLEAVRKRPGMYIGSTGEEGLHHMIWEIIDNSIDEAMGGFASTVKLTLKDNFVTIVEDDGRGIPVDIHPKTNRSTVETVFTVLHAGGKFDNDSYKVSGGLHGVGASVVNALSSSFKVWVAREHQQYFLAFHNGGEVIGDLVNEGKCDKEHGTKVEFVPDFTVMEKSDYKQTVIASRLQQLAFLNKGIQIDFVDERRQNPQSFSWKYDGGLVQYIHHLNNEKEPLFEDIIFGEKTDTVKSVSRDESYTIKVEVAFQYNKTYNQSIFSFCNNINTTEGGTHVEGFRNALVKIINRFAVENKFLKETDEKITRDDICEGLTAIISIKHPNPQYEGQTKKKLGNTEVRPLVNSIVSEIFERFMLENPQEANAIIRKTLLAQEARRRSQEARELTRRKSPFDSGSLPGKLADCTTRDPSISELYIVEGDSAGGTAKTGRDRYFQAILPLRGKILNVEKSHFEQIFNNVEISALVMAVGCGIKPDFELEKLRYNKIIIMTDADVDGAHIRTLLLTFFFRFMYPLVEQGNIYIAQPPLYKVSYSNKDLYMQTDVQLEEWKQQHPNLKYNLQRYKGLGEMDAIQLWETTMDPKVRTLLKVTVEDASIADKAFSLLMGDEVPPRREFIEQNARNVKNIDI.

Basic and acidic residues predominate over residues 400-414 (RRSQEARELTRRKSP). A disordered region spans residues 400–422 (RRSQEARELTRRKSPFDSGSLPG). In terms of domain architecture, Toprim spans 435–549 (SELYIVEGDS…QGNIYIAQPP (115 aa)). Mg(2+)-binding residues include E441, D514, and D516.

The protein belongs to the type II topoisomerase GyrB family. Heterotetramer, composed of two GyrA and two GyrB chains. In the heterotetramer, GyrA contains the active site tyrosine that forms a transient covalent intermediate with DNA, while GyrB binds cofactors and catalyzes ATP hydrolysis. It depends on Mg(2+) as a cofactor. The cofactor is Mn(2+). Ca(2+) serves as cofactor.

Its subcellular location is the cytoplasm. It carries out the reaction ATP-dependent breakage, passage and rejoining of double-stranded DNA.. In terms of biological role, a type II topoisomerase that negatively supercoils closed circular double-stranded (ds) DNA in an ATP-dependent manner to modulate DNA topology and maintain chromosomes in an underwound state. Negative supercoiling favors strand separation, and DNA replication, transcription, recombination and repair, all of which involve strand separation. Also able to catalyze the interconversion of other topological isomers of dsDNA rings, including catenanes and knotted rings. Type II topoisomerases break and join 2 DNA strands simultaneously in an ATP-dependent manner. The sequence is that of DNA gyrase subunit B from Mycoplasma pneumoniae (strain ATCC 29342 / M129 / Subtype 1) (Mycoplasmoides pneumoniae).